We begin with the raw amino-acid sequence, 121 residues long: MVTKNSTRTEVKALAQNIHMSPFKARRVIDQIRGRSYEETLMILELMPYRAAFTILKLVYSAAANANNLGLNEAESFISKAEVNGGTVLKRLRPRARGRSYRIKRPTCHITIVLKDKSKNL.

It belongs to the universal ribosomal protein uL22 family. In terms of assembly, part of the 50S ribosomal subunit.

It is found in the plastid. Its subcellular location is the chloroplast. In terms of biological role, this protein binds specifically to 23S rRNA. Its function is as follows. The globular domain of the protein is located near the polypeptide exit tunnel on the outside of the subunit, while an extended beta-hairpin is found that lines the wall of the exit tunnel in the center of the 70S ribosome. The protein is Large ribosomal subunit protein uL22c (rpl22) of Lemna minor (Common duckweed).